The chain runs to 1004 residues: Hyaluronate lyase HylB (1004 aa).

Positions methionine 1 to alanine 29 are cleaved as a signal peptide. Active-site residues include histidine 468, tyrosine 477, and arginine 531.

Belongs to the polysaccharide lyase 8 family.

It localises to the secreted. It carries out the reaction [hyaluronan](n) = n 3-(4-deoxy-beta-D-gluc-4-enuronosyl)-N-acetyl-D-glucosamine + H2O. It catalyses the reaction Eliminative degradation of polysaccharides containing 1,4-beta-D-hexosaminyl and 1,3-beta-D-glucuronosyl linkages to disaccharides containing 4-deoxy-beta-D-gluc-4-enuronosyl groups.. Its function is as follows. Degrades hyaluronic acid (HA) and chondroitin sulfate (CS) A in vitro. Is not active against heparin sodium salt (HS). Involved in the pathogenesis of vancomycin-resistant E.faecalis infections. Contributes to attenuation of the lipopolysaccharide (LPS)-mediated nuclear factor (NF)-kappa-B activation assayed in the mouse RAW-Blue reporter macrophages. This is Hyaluronate lyase HylB from Enterococcus faecalis (strain ATCC 700802 / V583).